Consider the following 213-residue polypeptide: MYPHRRADMNPISEFIRGITKDNPTFGLVLGLCPTLAVTTSVENGIGMAMGTLFVLVGSNMMVSAIRKGIPGTVRLPVEIIVIATFVTIVDMVMEAFTPDLYTSLGVFIPLIVVNCIVIGRAEAYALKNGVFYSIIDALGEGTGFLLVLILIGGIRELLGTGIIDPFGMTLINLSGVINPAMFMTMSPGAFLTIAVLMTIVNYRRQQKAAKGG.

6 consecutive transmembrane segments (helical) span residues 25–45 (TFGL…VENG), 46–66 (IGMA…VSAI), 77–97 (PVEI…MEAF), 100–120 (DLYT…IVIG), 135–155 (IIDA…IGGI), and 181–201 (AMFM…MTIV).

This sequence belongs to the NqrDE/RnfAE family. The Rnf complex is probably composed of eight subunits, including RnfA, RnfB, RnfC, RnfD, RnfE and RnfG.

It localises to the cell membrane. Part of a membrane-bound complex that couples electron transfer with translocation of ions across the membrane. Catalyzes Na(+) transport, most probably coupled to electron transfer from reduced ferredoxin to methanophenazine and heterodisulfide reductase. Involved in heterodisulfide reduction during methanogenesis from acetate. The chain is Ion-translocating oxidoreductase complex subunit E from Methanosarcina acetivorans (strain ATCC 35395 / DSM 2834 / JCM 12185 / C2A).